Consider the following 167-residue polypeptide: Regulator of sigma D (167 aa).

It belongs to the Rsd/AlgQ family. In terms of assembly, interacts with RpoD.

It localises to the cytoplasm. Functionally, binds RpoD and negatively regulates RpoD-mediated transcription activation by preventing the interaction between the primary sigma factor RpoD with the catalytic core of the RNA polymerase and with promoter DNA. May be involved in replacement of the RNA polymerase sigma subunit from RpoD to RpoS during the transition from exponential growth to the stationary phase. In Yersinia enterocolitica serotype O:8 / biotype 1B (strain NCTC 13174 / 8081), this protein is Regulator of sigma D.